The chain runs to 391 residues: 1-acyl-sn-glycerol-3-phosphate acyltransferase 2 (391 aa).

The helical transmembrane segment at 3–23 (MAAAAVIVPLGILFFISGLVV) threads the bilayer. Residues 92-97 (HRSDID) carry the HXXXXD motif motif. 2 helical membrane-spanning segments follow: residues 306-326 (LAVVVSWACLLTLGAMKFLHW) and 334-354 (KGIALSALGLGIITLCMQILI). The disordered stretch occupies residues 358–391 (QSERSTPAKVAPAKPKDKHQSGSSSQTEVEEKQK).

The protein belongs to the 1-acyl-sn-glycerol-3-phosphate acyltransferase family.

It is found in the endoplasmic reticulum membrane. It carries out the reaction a 1-acyl-sn-glycero-3-phosphate + an acyl-CoA = a 1,2-diacyl-sn-glycero-3-phosphate + CoA. Its pathway is phospholipid metabolism; CDP-diacylglycerol biosynthesis; CDP-diacylglycerol from sn-glycerol 3-phosphate: step 2/3. Its function is as follows. Converts lysophosphatidic acid (LPA) into phosphatidic acid by incorporating acyl moiety at the 2 position. The protein is 1-acyl-sn-glycerol-3-phosphate acyltransferase 2 (LPAT2) of Brassica oleracea (Wild cabbage).